The chain runs to 107 residues: uncharacterized protein (107 aa).

2 helical membrane passes run 11 to 31 and 58 to 78; these read CVNFVIIIGIPLLIEASILCI and LFFLSFYMLHFPITLSILAFQ.

The protein localises to the mitochondrion membrane. This is an uncharacterized protein from Saccharomyces cerevisiae (strain ATCC 204508 / S288c) (Baker's yeast).